The following is a 95-amino-acid chain: Large ribosomal subunit protein bL28 (95 aa).

It belongs to the bacterial ribosomal protein bL28 family.

This Zymomonas mobilis subsp. mobilis (strain ATCC 31821 / ZM4 / CP4) protein is Large ribosomal subunit protein bL28.